The chain runs to 112 residues: Large ribosomal subunit protein uL22 (112 aa).

It belongs to the universal ribosomal protein uL22 family. As to quaternary structure, part of the 50S ribosomal subunit.

This protein binds specifically to 23S rRNA; its binding is stimulated by other ribosomal proteins, e.g. L4, L17, and L20. It is important during the early stages of 50S assembly. It makes multiple contacts with different domains of the 23S rRNA in the assembled 50S subunit and ribosome. In terms of biological role, the globular domain of the protein is located near the polypeptide exit tunnel on the outside of the subunit, while an extended beta-hairpin is found that lines the wall of the exit tunnel in the center of the 70S ribosome. The chain is Large ribosomal subunit protein uL22 from Mesoplasma florum (strain ATCC 33453 / NBRC 100688 / NCTC 11704 / L1) (Acholeplasma florum).